A 430-amino-acid polypeptide reads, in one-letter code: UDP-N-acetylglucosamine 1-carboxyvinyltransferase (430 aa).

22–23 (KN) is a binding site for phosphoenolpyruvate. Arg-102 provides a ligand contact to UDP-N-acetyl-alpha-D-glucosamine. Cys-126 (proton donor) is an active-site residue. Cys-126 bears the 2-(S-cysteinyl)pyruvic acid O-phosphothioketal mark. UDP-N-acetyl-alpha-D-glucosamine contacts are provided by residues 131–135 (RPVDL), 172–175 (KVSV), Asp-317, and Ile-339.

It belongs to the EPSP synthase family. MurA subfamily.

It localises to the cytoplasm. It catalyses the reaction phosphoenolpyruvate + UDP-N-acetyl-alpha-D-glucosamine = UDP-N-acetyl-3-O-(1-carboxyvinyl)-alpha-D-glucosamine + phosphate. The protein operates within cell wall biogenesis; peptidoglycan biosynthesis. Its function is as follows. Cell wall formation. Adds enolpyruvyl to UDP-N-acetylglucosamine. This is UDP-N-acetylglucosamine 1-carboxyvinyltransferase from Sinorhizobium fredii (strain NBRC 101917 / NGR234).